A 4226-amino-acid chain; its full sequence is Guanylate cyclase alpha (4226 aa).

Residues 1 to 104 lie on the Cytoplasmic side of the membrane; sequence MSDSKKHYNE…SFIFKGLYEQ (104 aa). A helical membrane pass occupies residues 105–125; that stretch reads FLRLPNIWFLLISLLEFIPQY. At 126–131 the chain is on the extracellular side; the sequence is QNLSNY. N-linked (GlcNAc...) asparagine glycosylation is present at asparagine 127. A helical membrane pass occupies residues 132–152; that stretch reads MYYSKHSSFFLLLFFICVSII. Residues 153-337 are Cytoplasmic-facing; the sequence is KNIYEDSRRS…LGYVNKELNS (185 aa). A helical membrane pass occupies residues 338–358; sequence YTIIGLIFTFICVFISVLFKW. The Extracellular portion of the chain corresponds to 359–392; the sequence is TEDDKFRNGSHFFLITVKDNICESIVKYTLLYSN. N-linked (GlcNAc...) asparagine glycosylation is present at asparagine 366. The helical transmembrane segment at 393–413 threads the bilayer; the sequence is IIPISILISVDLISILQSILI. Residues 414-2083 lie on the Cytoplasmic side of the membrane; that stretch reads ENDNHISTFE…FIYGSKHLYT (1670 aa). Disordered stretches follow at residues 552-572, 832-904, 968-989, and 1740-1765; these read EHSQTLDNNNNNDNNNNNNIC, SSKN…SNND, INNNNNNNNDQKTNNLKYKSSS, and NINKNYKYDKNDKHNNNNNNNNNNSN. Positions 558–570 are enriched in low complexity; sequence DNNNNNDNNNNNN. The span at 838–847 shows a compositional bias: acidic residues; it reads TLDDPTELIS. A compositionally biased stretch (basic and acidic residues) spans 854-873; sequence LRDKYEHTSDKKNDTNKNRD. Positions 874 to 904 are enriched in low complexity; that stretch reads GANNSNNNNNKDVSNNKNKNNNNYNYNSNND. Residues 1745-1754 are compositionally biased toward basic and acidic residues; sequence YKYDKNDKHN. Over residues 1755–1765 the composition is skewed to low complexity; that stretch reads NNNNNNNNNSN. The helical transmembrane segment at 2084–2104 threads the bilayer; that stretch reads ISIILYWNFFKNILLILPIFF. Over 2105–2119 the chain is Extracellular; the sequence is YQAYASWSCVKIYPE. Residues 2120–2140 traverse the membrane as a helical segment; that stretch reads LLYTFFSIFWVFIPIIYYMFL. Over 2141–2169 the chain is Cytoplasmic; that stretch reads QHNLNYDILYNIPLFYALSRRRYNMNCFK. Residues 2170 to 2190 form a helical membrane-spanning segment; the sequence is FLPWIFEAIFYSMIIYFFAYA. The Extracellular portion of the chain corresponds to 2191-2202; sequence ALKENSHLNNGE. The helical transmembrane segment at 2203–2223 threads the bilayer; that stretch reads VITINTFGNICFIGCLLISIL. Residues 2224 to 2235 are Cytoplasmic-facing; that stretch reads RLFLEGSLWSPS. A helical transmembrane segment spans residues 2236-2256; the sequence is ILITCFGCFLFVFFPSLLFIC. Residues 2257–2275 lie on the Extracellular side of the membrane; sequence FAYLSNEYIREVFRQTFLW. Residues 2276–2296 form a helical membrane-spanning segment; that stretch reads APLYVLLILWFSTCIISYIFI. Topologically, residues 2297 to 2787 are cytoplasmic; that stretch reads NFTKSILFPN…QIHKKNKFYK (491 aa). The interval 2477–2505 is disordered; the sequence is NNDNNNDDNDNDNNNNNNNNDNYNNNDHN. Residues 2488–2502 are compositionally biased toward low complexity; that stretch reads DNNNNNNNNDNYNNN. A helical membrane pass occupies residues 2788–2808; it reads TFTPWYRFIFLLLGVFFLYVW. Residues 2809–2828 lie on the Extracellular side of the membrane; that stretch reads KLESSLSQLWNMPSDASTDV. A helical transmembrane segment spans residues 2829–2849; sequence FILFLSLLLELVLLAATVTTF. Over 2850-2860 the chain is Cytoplasmic; it reads FSNIFIENFNK. Residues 2861–2881 form a helical membrane-spanning segment; it reads IISAVVILIITYHVVSYSVTH. The Extracellular segment spans residues 2882–2900; that stretch reads IDGVFQAVLFPLYTFVILR. The chain crosses the membrane as a helical span at residues 2901-2921; sequence LPFVNAVLCNIIFLGLFIIRF. The Cytoplasmic segment spans residues 2922–2930; that stretch reads NGDHFLDKK. Residues 2931-2951 traverse the membrane as a helical segment; it reads GLAHYIPLFIGVDVFVGFVGY. Topologically, residues 2952-3008 are extracellular; sequence RLEYNQRKNFLLEYSVESSRRKQREILNTMLPPFVVDEMIYSELNEEGIPISLKAED. A helical membrane pass occupies residues 3009 to 3029; sequence ISTVTIIFCDIYDFQNIVASI. Positions 3013-3270 constitute a Guanylate cyclase 1 domain; the sequence is TIIFCDIYDF…DTVNTASRMK (258 aa). At 3030–3738 the chain is on the cytoplasmic side; the sequence is EPTRLVEVLD…SNINSIEQAL (709 aa). Disordered stretches follow at residues 3077 to 3150 and 3201 to 3230; these read EDEL…FEED and DANDDTHNVNDSFNNDKAENDNTNTDNNKP. 2 stretches are compositionally biased toward low complexity: residues 3083 to 3098 and 3108 to 3138; these read NKYSNNNKNNNNNYYY and NNNNNNNNNNNNNNNNNNNNLNNNNNNNNVN. Residues 3140–3150 are compositionally biased toward acidic residues; sequence SDDDGDFFEED. Over residues 3201-3220 the composition is skewed to basic and acidic residues; it reads DANDDTHNVNDSFNNDKAEN. A helical membrane pass occupies residues 3739–3759; sequence IIFLVTFVMQTLISSTVSIVF. Topologically, residues 3760–3773 are extracellular; that stretch reads IDHKRATQTLHINY. Residues 3774–3794 traverse the membrane as a helical segment; that stretch reads FAYWSVRSVYTFFGFVLWLLF. At 3795-3811 the chain is on the cytoplasmic side; it reads HYRTRPEVSSLLNIKWM. Residues 3812–3832 traverse the membrane as a helical segment; sequence IFFLNLLFISAACVFSIAYLW. The Extracellular portion of the chain corresponds to 3833–3840; the sequence is AISETDQT. Residues 3841–3861 form a helical membrane-spanning segment; sequence TSYTIWMTNDTIEFFFYLVIL. The Cytoplasmic portion of the chain corresponds to 3862 to 3871; that stretch reads HHNTGMLFQT. Residues 3872-3892 traverse the membrane as a helical segment; sequence CILVDLLFITMSLTFIATSVV. A topological domain (extracellular) is located at residue lysine 3893. Residues 3894 to 3914 form a helical membrane-spanning segment; sequence TITTDSTVLLIPWYVAFNLIS. The Cytoplasmic portion of the chain corresponds to 3915–4226; it reads TYCKESIDRR…INVNDRQSNL (312 aa). The 135-residue stretch at 3970–4104 folds into the Guanylate cyclase 2 domain; sequence TFLFADICGF…IDVLTGNLME (135 aa). Mg(2+) contacts are provided by aspartate 3975, isoleucine 3976, and aspartate 4019.

The protein in the N-terminal section; belongs to the cation transport ATPase (P-type) (TC 3.A.3) family. Type IV subfamily. It in the C-terminal section; belongs to the adenylyl cyclase class-4/guanylyl cyclase family. Requires Mg(2+) as cofactor. Mn(2+) serves as cofactor.

It is found in the cell membrane. The protein localises to the cytoplasmic vesicle membrane. It catalyses the reaction GTP = 3',5'-cyclic GMP + diphosphate. In terms of biological role, catalyzes the synthesis of the second messenger cGMP from GTP. In asexual blood stage schizonts, required for cGMP production which is essential for PKG activation, PKG-dependent Ca(2+) release, and ultimately merozoite egress from host erythrocytes. This is Guanylate cyclase alpha from Plasmodium falciparum (isolate 3D7).